We begin with the raw amino-acid sequence, 769 residues long: Gephyrin (769 aa).

Residues 14 to 153 (QIRVGVLTVS…LPGSKKGSQE (140 aa)) are MPT Mo-transferase. Positions 140-349 (LIINLPGSKK…VDITKVARRH (210 aa)) are interaction with GABARAP. 2 disordered regions span residues 181–232 (DELE…DSSS) and 260–299 (TASLSTTPSESPRAQATSRLSTASCPTPKQIRRPDESKGV). Residues 187–199 (PSPPPPLSPPPTT) show a composition bias toward pro residues. Phosphoserine occurs at positions 188 and 194. Position 198 is a phosphothreonine (T198). S200 carries the phosphoserine modification. Residue C212 is the site of S-palmitoyl cysteine attachment. Positions 261–286 (ASLSTTPSESPRAQATSRLSTASCPT) are enriched in polar residues. S262 is subject to Phosphoserine. 2 positions are modified to phosphothreonine: T265 and T266. Phosphoserine occurs at positions 268 and 270. C284 carries S-palmitoyl cysteine lipidation. The interval 327–769 (SSKENILRAS…VVDVMVIGRL (443 aa)) is MPT adenylyltransferase. Residue S338 is modified to Phosphoserine.

In the N-terminal section; belongs to the MoaB/Mog family. The protein in the C-terminal section; belongs to the MoeA family. As to quaternary structure, homotrimer, homodimer and homooligomer. Interacts with SRGAP2 (via SH3 domain). Interacts with GLRB. Interacts with GABARAP. Interacts with GABRA3. GABRA3 and GLRB occupy overlapping binding sites. Interacts with ARHGAP32; IQSEC3, INSYN1 and INSYN2A. Requires Mg(2+) as cofactor. Palmitoylated. Palmitoylation is stimulated by GABA type A receptors activity. Palmitoylation by ZDHHC12 regulates clustering at synapses.

Its subcellular location is the postsynaptic cell membrane. The protein resides in the cell membrane. It is found in the cytoplasm. The protein localises to the cytosol. It localises to the cytoskeleton. Its subcellular location is the cell projection. The protein resides in the dendrite. It is found in the postsynaptic density. It catalyses the reaction molybdopterin + ATP + H(+) = adenylyl-molybdopterin + diphosphate. The catalysed reaction is adenylyl-molybdopterin + molybdate = Mo-molybdopterin + AMP + H(+). It participates in cofactor biosynthesis; molybdopterin biosynthesis. Its activity is regulated as follows. Inhibited by copper and tungsten. Its function is as follows. Microtubule-associated protein involved in membrane protein-cytoskeleton interactions. It is thought to anchor the inhibitory glycine receptor (GLYR) to subsynaptic microtubules. Acts as a major instructive molecule at inhibitory synapses, where it also clusters GABA type A receptors. In terms of biological role, also has a catalytic activity and catalyzes two steps in the biosynthesis of the molybdenum cofactor. In the first step, molybdopterin is adenylated. Subsequently, molybdate is inserted into adenylated molybdopterin and AMP is released. This Mus musculus (Mouse) protein is Gephyrin (Gphn).